Reading from the N-terminus, the 198-residue chain is MQFEVKDLINKIKKDGLDEAERLASEIILNAKQEAEAIILKAESEAKELKIKAEKEAYDYKRYSLEASRQAFRDLVIGTENSIKSLFKSALKDSVSSVYDSNFLRELIIRVLDVWGKDDKIDIMLNESDIDNLSSILKTSIRNKFGAEIEIKPFKGINKGFKVQQRDGSLYYDFTSEAIADILFEYLNPRFKEIIKLD.

The protein belongs to the V-ATPase E subunit family.

In terms of biological role, produces ATP from ADP in the presence of a proton gradient across the membrane. The protein is V-type proton ATPase subunit E of Borrelia recurrentis (strain A1).